Here is a 186-residue protein sequence, read N- to C-terminus: Nucleoside triphosphate pyrophosphatase (186 aa).

The active-site Proton acceptor is the aspartate 68.

This sequence belongs to the Maf family. A divalent metal cation serves as cofactor.

The protein resides in the cytoplasm. It carries out the reaction a ribonucleoside 5'-triphosphate + H2O = a ribonucleoside 5'-phosphate + diphosphate + H(+). The catalysed reaction is a 2'-deoxyribonucleoside 5'-triphosphate + H2O = a 2'-deoxyribonucleoside 5'-phosphate + diphosphate + H(+). Its function is as follows. Nucleoside triphosphate pyrophosphatase. May have a dual role in cell division arrest and in preventing the incorporation of modified nucleotides into cellular nucleic acids. The sequence is that of Nucleoside triphosphate pyrophosphatase from Prochlorococcus marinus (strain MIT 9303).